Consider the following 20-residue polypeptide: AHQLPMGTLCNFYEWYRRDD.

The catalysed reaction is Endohydrolysis of (1-&gt;4)-alpha-D-glucosidic linkages in polysaccharides containing three or more (1-&gt;4)-alpha-linked D-glucose units.. With respect to regulation, strongly inhibited by Hg (2+). Inhibited by Zn (2+). Activated by Fe (2+), Mg (2+) and Ba (2+). Its function is as follows. Alpha-amylase active towards amylose, starch, amylopectin and maltodextrins. Has lower activity towards glycogen, and is not active towards alpha/beta-cyclodextrin. This chain is Alpha-amylase, found in Bacillus sp.